Here is a 145-residue protein sequence, read N- to C-terminus: Large ribosomal subunit protein bL35c (145 aa).

The N-terminal 56 residues, 1–56, are a transit peptide targeting the chloroplast; the sequence is MASLSMASVNVSFCHPLRSSSPKVSLRSSVHFATSLSSSHSISGLRAVLPLKISTV.

This sequence belongs to the bacterial ribosomal protein bL35 family. In terms of assembly, part of the 50S ribosomal subunit.

It localises to the plastid. It is found in the chloroplast. This Arabidopsis thaliana (Mouse-ear cress) protein is Large ribosomal subunit protein bL35c.